The following is a 133-amino-acid chain: Cell division protein FtsL (133 aa).

The Cytoplasmic segment spans residues 1 to 45 (MAVEKVYQPYDEQVYNSIPKQQPQTKPEKKTVSRKVVVQLTKFEK). Residues 46–65 (VLYITLITVIAMLSIYMLSL) traverse the membrane as a helical segment. The Extracellular segment spans residues 66–133 (KMDAYDTRGK…VVRSNGEAKN (68 aa)).

Belongs to the FtsL family.

Its subcellular location is the cell membrane. Functionally, essential cell division protein. This is Cell division protein FtsL from Staphylococcus aureus (strain NCTC 8325 / PS 47).